The primary structure comprises 825 residues: Probable inorganic carbon transporter subunit DabA (825 aa).

Cys334, Asp336, His521, and Cys536 together coordinate Zn(2+).

Belongs to the inorganic carbon transporter (TC 9.A.2) DabA family. Forms a complex with DabB. The cofactor is Zn(2+).

The protein resides in the cell inner membrane. Its function is as follows. Part of an energy-coupled inorganic carbon pump. In Acidithiobacillus ferrooxidans (strain ATCC 53993 / BNL-5-31) (Leptospirillum ferrooxidans (ATCC 53993)), this protein is Probable inorganic carbon transporter subunit DabA.